A 452-amino-acid polypeptide reads, in one-letter code: tRNA modification GTPase MnmE (452 aa).

(6S)-5-formyl-5,6,7,8-tetrahydrofolate contacts are provided by R21, E78, and K118. In terms of domain architecture, TrmE-type G spans 214 to 375; that stretch reads GMKVVIAGRP…LREHLKKSMG (162 aa). N224 provides a ligand contact to K(+). Residues 224–229, 243–249, and 268–271 contribute to the GTP site; these read NAGKSS, TNIAGTT, and DTAG. S228 lines the Mg(2+) pocket. K(+) contacts are provided by T243, I245, and T248. Residue T249 participates in Mg(2+) binding. Residue K452 coordinates (6S)-5-formyl-5,6,7,8-tetrahydrofolate.

The protein belongs to the TRAFAC class TrmE-Era-EngA-EngB-Septin-like GTPase superfamily. TrmE GTPase family. As to quaternary structure, homodimer. Heterotetramer of two MnmE and two MnmG subunits. K(+) is required as a cofactor.

Its subcellular location is the cytoplasm. Its function is as follows. Exhibits a very high intrinsic GTPase hydrolysis rate. Involved in the addition of a carboxymethylaminomethyl (cmnm) group at the wobble position (U34) of certain tRNAs, forming tRNA-cmnm(5)s(2)U34. This chain is tRNA modification GTPase MnmE, found in Actinobacillus pleuropneumoniae serotype 3 (strain JL03).